A 267-amino-acid polypeptide reads, in one-letter code: tRNA pseudouridine synthase A (267 aa).

The active-site Nucleophile is D51. Residue Y109 coordinates substrate.

The protein belongs to the tRNA pseudouridine synthase TruA family. As to quaternary structure, homodimer.

The catalysed reaction is uridine(38/39/40) in tRNA = pseudouridine(38/39/40) in tRNA. Its function is as follows. Formation of pseudouridine at positions 38, 39 and 40 in the anticodon stem and loop of transfer RNAs. The protein is tRNA pseudouridine synthase A of Staphylococcus aureus (strain USA300).